Here is a 552-residue protein sequence, read N- to C-terminus: Protoheme IX farnesyltransferase, mitochondrial (552 aa).

Residues 118-185 (AADIPPSTST…PSGEIPPDAS (68 aa)) are disordered. The segment covering 150 to 168 (EQAASASSNAPSEAAQTTP) has biased composition (low complexity). Helical transmembrane passes span 215-235 (LTML…VPDF), 245-267 (LSPL…ANAL), 296-316 (AAVC…QFGV), 318-338 (PTVA…YTPL), 346-366 (TWVG…AAAG), 387-407 (AGGW…FMAL), 441-461 (VFVP…SFAV), and 487-507 (ARGL…LALL).

The protein belongs to the UbiA prenyltransferase family.

It localises to the mitochondrion membrane. It catalyses the reaction heme b + (2E,6E)-farnesyl diphosphate + H2O = Fe(II)-heme o + diphosphate. Its function is as follows. Converts protoheme IX and farnesyl diphosphate to heme O. The polypeptide is Protoheme IX farnesyltransferase, mitochondrial (COX10) (Pyricularia oryzae (strain 70-15 / ATCC MYA-4617 / FGSC 8958) (Rice blast fungus)).